The chain runs to 323 residues: Voltage-dependent calcium channel gamma-2 subunit (323 aa).

The chain crosses the membrane as a helical span at residues 10–30; sequence MLLTTVGAFAAFSLMTIAVGT. A glycan (N-linked (GlcNAc...) asparagine) is linked at N48. Helical transmembrane passes span 104-124, 134-154, and 182-202; these read SSIF…CIAA, IILS…IGII, and FGAL…HMFI. Residues 233-261 are disordered; that stretch reads YQRRSRSSSRSTEPSHSRDASPVGIKGFN. S253 is subject to Phosphoserine. Y271 carries the post-translational modification Phosphotyrosine. The residue at position 321 (T321) is a Phosphothreonine.

It belongs to the PMP-22/EMP/MP20 family. CACNG subfamily. As to quaternary structure, the L-type calcium channel is composed of five subunits: alpha-1, alpha-2/delta, beta and gamma. Interacts with the PDZ domains of DLG4/PSD-95 and DLG1/SAP97. May interact with GOPC. Acts as an auxiliary subunit for AMPA-selective glutamate receptors (AMPARs). Found in a complex with GRIA1, GRIA2, GRIA3, GRIA4, CNIH2, CNIH3, CACNG3, CACNG4, CACNG5, CACNG7 and CACNG8. Interacts with GRIA1 and GRIA2. Interacts with MPP2. Post-translationally, phosphorylation of Thr-321 impairs interaction with DLG1 and DLG4. Brain.

Its subcellular location is the membrane. It localises to the synapse. The protein resides in the synaptosome. Its function is as follows. Regulates the trafficking and gating properties of AMPA-selective glutamate receptors (AMPARs). Promotes their targeting to the cell membrane and synapses and modulates their gating properties by slowing their rates of activation, deactivation and desensitization. Does not show subunit-specific AMPA receptor regulation and regulates all AMPAR subunits. Thought to stabilize the calcium channel in an inactivated (closed) state. The chain is Voltage-dependent calcium channel gamma-2 subunit (CACNG2) from Homo sapiens (Human).